Here is a 370-residue protein sequence, read N- to C-terminus: Queuine tRNA-ribosyltransferase (370 aa).

The Proton acceptor role is filled by aspartate 89. Substrate contacts are provided by residues aspartate 89–phenylalanine 93, aspartate 143, glutamine 185, and glycine 212. The tract at residues glycine 243 to aspartate 249 is RNA binding. The Nucleophile role is filled by aspartate 262. Residues threonine 267–arginine 271 form an RNA binding; important for wobble base 34 recognition region. The Zn(2+) site is built by cysteine 300, cysteine 302, cysteine 305, and histidine 331.

It belongs to the queuine tRNA-ribosyltransferase family. Homodimer. Within each dimer, one monomer is responsible for RNA recognition and catalysis, while the other monomer binds to the replacement base PreQ1. The cofactor is Zn(2+).

It carries out the reaction 7-aminomethyl-7-carbaguanine + guanosine(34) in tRNA = 7-aminomethyl-7-carbaguanosine(34) in tRNA + guanine. Its pathway is tRNA modification; tRNA-queuosine biosynthesis. Its function is as follows. Catalyzes the base-exchange of a guanine (G) residue with the queuine precursor 7-aminomethyl-7-deazaguanine (PreQ1) at position 34 (anticodon wobble position) in tRNAs with GU(N) anticodons (tRNA-Asp, -Asn, -His and -Tyr). Catalysis occurs through a double-displacement mechanism. The nucleophile active site attacks the C1' of nucleotide 34 to detach the guanine base from the RNA, forming a covalent enzyme-RNA intermediate. The proton acceptor active site deprotonates the incoming PreQ1, allowing a nucleophilic attack on the C1' of the ribose to form the product. After dissociation, two additional enzymatic reactions on the tRNA convert PreQ1 to queuine (Q), resulting in the hypermodified nucleoside queuosine (7-(((4,5-cis-dihydroxy-2-cyclopenten-1-yl)amino)methyl)-7-deazaguanosine). The sequence is that of Queuine tRNA-ribosyltransferase from Pseudoalteromonas atlantica (strain T6c / ATCC BAA-1087).